A 224-amino-acid chain; its full sequence is Uracil phosphoribosyltransferase (224 aa).

38–42 (KGLVK) serves as a coordination point for GTP. 5-phospho-alpha-D-ribose 1-diphosphate-binding positions include R87, R112, and 140 to 148 (DPMIATGST). Residues I204 and 209-211 (GDA) contribute to the uracil site. D210 is a 5-phospho-alpha-D-ribose 1-diphosphate binding site.

This sequence belongs to the UPRTase family. It depends on Mg(2+) as a cofactor.

The enzyme catalyses UMP + diphosphate = 5-phospho-alpha-D-ribose 1-diphosphate + uracil. It participates in pyrimidine metabolism; UMP biosynthesis via salvage pathway; UMP from uracil: step 1/1. Allosterically activated by GTP. Its function is as follows. Catalyzes the conversion of uracil and 5-phospho-alpha-D-ribose 1-diphosphate (PRPP) to UMP and diphosphate. The chain is Uracil phosphoribosyltransferase from Thermococcus gammatolerans (strain DSM 15229 / JCM 11827 / EJ3).